The sequence spans 202 residues: MHNASDIQSALVPMVIEQTAKGERSFDIYSRLLKERIIFLVGQVEEHMANLIVAQLLFLESESPDKDIFLYINSPGGSVTAGMAIYDTMQFIKPNVSTVCIGQAASMGAFLLAGGEKGKRFCLPNSRVMIHQPLGGFQGQASDIAIHAQEILGIKHKLNLMLAEHTGQPLEVIERDTDRDNFMSATQAVDYGLVDAVMTKRG.

The Nucleophile role is filled by Ser106. Residue His131 is part of the active site.

This sequence belongs to the peptidase S14 family. Fourteen ClpP subunits assemble into 2 heptameric rings which stack back to back to give a disk-like structure with a central cavity, resembling the structure of eukaryotic proteasomes.

Its subcellular location is the cytoplasm. The enzyme catalyses Hydrolysis of proteins to small peptides in the presence of ATP and magnesium. alpha-casein is the usual test substrate. In the absence of ATP, only oligopeptides shorter than five residues are hydrolyzed (such as succinyl-Leu-Tyr-|-NHMec, and Leu-Tyr-Leu-|-Tyr-Trp, in which cleavage of the -Tyr-|-Leu- and -Tyr-|-Trp bonds also occurs).. Functionally, cleaves peptides in various proteins in a process that requires ATP hydrolysis. Has a chymotrypsin-like activity. Plays a major role in the degradation of misfolded proteins. The chain is ATP-dependent Clp protease proteolytic subunit from Shewanella sp. (strain MR-7).